A 300-amino-acid chain; its full sequence is Nucleotide-binding protein MCCL_0516 (300 aa).

15–22 (GMSGAGKS) is a binding site for ATP. 66 to 69 (DLRG) lines the GTP pocket.

This sequence belongs to the RapZ-like family.

Displays ATPase and GTPase activities. The sequence is that of Nucleotide-binding protein MCCL_0516 from Macrococcus caseolyticus (strain JCSC5402) (Macrococcoides caseolyticum).